The following is a 583-amino-acid chain: Putative fatty-acid--CoA ligase fadD25 (583 aa).

A run of 3 helical transmembrane segments spans residues 77–97 (YVVS…LSIP), 109–129 (VFAD…DNVV), and 229–249 (FVLG…TSPI). Residues 353 to 375 (IVQFDPQKLPDGQAERTESDGGT) form a disordered region.

Belongs to the ATP-dependent AMP-binding enzyme family.

The protein resides in the cell membrane. The protein is Putative fatty-acid--CoA ligase fadD25 (fadD25) of Mycobacterium tuberculosis (strain CDC 1551 / Oshkosh).